The following is an 862-amino-acid chain: Leucine--tRNA ligase (862 aa).

Positions 42-52 (PYPSGKIHIGH) match the 'HIGH' region motif. Positions 614–618 (KMSKS) match the 'KMSKS' region motif. An ATP-binding site is contributed by K617.

This sequence belongs to the class-I aminoacyl-tRNA synthetase family.

The protein resides in the cytoplasm. It carries out the reaction tRNA(Leu) + L-leucine + ATP = L-leucyl-tRNA(Leu) + AMP + diphosphate. In Syntrophus aciditrophicus (strain SB), this protein is Leucine--tRNA ligase.